Reading from the N-terminus, the 342-residue chain is Holliday junction branch migration complex subunit RuvB (342 aa).

The interval 1-179 is large ATPase domain (RuvB-L); it reads MTSILSPEKS…FGIPMRLNFY (179 aa). ATP is bound by residues Leu18, Arg19, Gly60, Lys63, Thr64, Thr65, 126 to 128, Arg169, Tyr179, and Arg216; that span reads EDF. Thr64 lines the Mg(2+) pocket. The small ATPAse domain (RuvB-S) stretch occupies residues 180–250; it reads NTEELKKVLN…IANFGLNRLE (71 aa). A head domain (RuvB-H) region spans residues 253–342; the sequence is IIGLDSNDYR…HQFNIFNDNE (90 aa). 3 residues coordinate DNA: Arg289, Arg308, and Arg313.

Belongs to the RuvB family. In terms of assembly, homohexamer. Forms an RuvA(8)-RuvB(12)-Holliday junction (HJ) complex. HJ DNA is sandwiched between 2 RuvA tetramers; dsDNA enters through RuvA and exits via RuvB. An RuvB hexamer assembles on each DNA strand where it exits the tetramer. Each RuvB hexamer is contacted by two RuvA subunits (via domain III) on 2 adjacent RuvB subunits; this complex drives branch migration. In the full resolvosome a probable DNA-RuvA(4)-RuvB(12)-RuvC(2) complex forms which resolves the HJ.

It is found in the cytoplasm. It catalyses the reaction ATP + H2O = ADP + phosphate + H(+). The RuvA-RuvB-RuvC complex processes Holliday junction (HJ) DNA during genetic recombination and DNA repair, while the RuvA-RuvB complex plays an important role in the rescue of blocked DNA replication forks via replication fork reversal (RFR). RuvA specifically binds to HJ cruciform DNA, conferring on it an open structure. The RuvB hexamer acts as an ATP-dependent pump, pulling dsDNA into and through the RuvAB complex. RuvB forms 2 homohexamers on either side of HJ DNA bound by 1 or 2 RuvA tetramers; 4 subunits per hexamer contact DNA at a time. Coordinated motions by a converter formed by DNA-disengaged RuvB subunits stimulates ATP hydrolysis and nucleotide exchange. Immobilization of the converter enables RuvB to convert the ATP-contained energy into a lever motion, pulling 2 nucleotides of DNA out of the RuvA tetramer per ATP hydrolyzed, thus driving DNA branch migration. The RuvB motors rotate together with the DNA substrate, which together with the progressing nucleotide cycle form the mechanistic basis for DNA recombination by continuous HJ branch migration. Branch migration allows RuvC to scan DNA until it finds its consensus sequence, where it cleaves and resolves cruciform DNA. In Rickettsia bellii (strain RML369-C), this protein is Holliday junction branch migration complex subunit RuvB.